A 268-amino-acid chain; its full sequence is Glucosamine-6-phosphate deaminase (268 aa).

Residue aspartate 67 is the Proton acceptor; for enolization step of the active site. The active-site For ring-opening step is the asparagine 137. Residue histidine 139 is the Proton acceptor; for ring-opening step of the active site. Glutamate 144 functions as the For ring-opening step in the catalytic mechanism.

It belongs to the glucosamine/galactosamine-6-phosphate isomerase family. NagB subfamily. Homohexamer.

The enzyme catalyses alpha-D-glucosamine 6-phosphate + H2O = beta-D-fructose 6-phosphate + NH4(+). The protein operates within amino-sugar metabolism; N-acetylneuraminate degradation; D-fructose 6-phosphate from N-acetylneuraminate: step 5/5. Catalyzes the reversible isomerization-deamination of glucosamine 6-phosphate (GlcN6P) to form fructose 6-phosphate (Fru6P) and ammonium ion. The polypeptide is Glucosamine-6-phosphate deaminase (Colwellia psychrerythraea (strain 34H / ATCC BAA-681) (Vibrio psychroerythus)).